The chain runs to 272 residues: PHD finger protein ALFIN-LIKE 6 (272 aa).

Residues 1 to 23 (MEGGGGGGGGGGGGGGGGGGGGA) are compositionally biased toward gly residues. Disordered regions lie at residues 1–24 (MEGGGGGGGGGGGGGGGGGGGGAP) and 162–218 (QAKE…DNTL). Positions 168 to 182 (PNSSSKSNKPSSKVQ) are enriched in low complexity. Basic and acidic residues predominate over residues 183-200 (SKAESRSKSKLSAPKDEE). The segment covering 201–214 (GSGDDEGEEEEDDH) has biased composition (acidic residues). A PHD-type zinc finger spans residues 216-268 (NTLCGTCGTNDGKDEFWICCDNCEKWYHGKCVKITPARAEHIKQYKCPDCTNK).

It belongs to the Alfin family.

The protein resides in the nucleus. Histone-binding component that specifically recognizes H3 tails trimethylated on 'Lys-4' (H3K4me3), which mark transcription start sites of virtually all active genes. The sequence is that of PHD finger protein ALFIN-LIKE 6 from Oryza sativa subsp. indica (Rice).